Consider the following 505-residue polypeptide: Deoxyguanosinetriphosphate triphosphohydrolase (505 aa).

The region spanning 66-273 (RLTHSLEVQQ…MEAADDISYC (208 aa)) is the HD domain.

This sequence belongs to the dGTPase family. Type 1 subfamily. As to quaternary structure, homotetramer. It depends on Mg(2+) as a cofactor.

It carries out the reaction dGTP + H2O = 2'-deoxyguanosine + triphosphate + H(+). Its function is as follows. dGTPase preferentially hydrolyzes dGTP over the other canonical NTPs. This chain is Deoxyguanosinetriphosphate triphosphohydrolase, found in Escherichia fergusonii (strain ATCC 35469 / DSM 13698 / CCUG 18766 / IAM 14443 / JCM 21226 / LMG 7866 / NBRC 102419 / NCTC 12128 / CDC 0568-73).